We begin with the raw amino-acid sequence, 461 residues long: High-affinity Na(+)/H(+) antiporter NhaS3 (461 aa).

Helical transmembrane passes span T22–A42, V58–F78, S113–L133, A148–F170, I175–A197, I209–G229, I239–I259, L280–L300, G360–F380, L391–G411, and A424–F444.

This sequence belongs to the monovalent cation:proton antiporter 2 (CPA2) transporter (TC 2.A.37) family.

The protein resides in the cellular thylakoid membrane. In terms of biological role, na(+)/H(+) antiporter that transports sodium from the cytoplasm into the thylakoid lumen in exchange for protons. Contributes to sodium homeostasis and tolerance. Also has Li(+)/H(+) antiport activity under K(+)-free conditions, but not under K(+)-rich conditions. The sequence is that of High-affinity Na(+)/H(+) antiporter NhaS3 (nhaS3) from Synechocystis sp. (strain ATCC 27184 / PCC 6803 / Kazusa).